We begin with the raw amino-acid sequence, 1087 residues long: Alpha-mannosidase G (1087 aa).

Residues H264, D266, D376, and H579 each contribute to the Zn(2+) site. D376 functions as the Nucleophile in the catalytic mechanism.

This sequence belongs to the glycosyl hydrolase 38 family. Requires Zn(2+) as cofactor.

The enzyme catalyses Hydrolysis of terminal, non-reducing alpha-D-mannose residues in alpha-D-mannosides.. This chain is Alpha-mannosidase G (manG), found in Dictyostelium discoideum (Social amoeba).